The primary structure comprises 385 residues: Ribosomal RNA large subunit methyltransferase G (385 aa).

The protein belongs to the methyltransferase superfamily. RlmG family.

Its subcellular location is the cytoplasm. It carries out the reaction guanosine(1835) in 23S rRNA + S-adenosyl-L-methionine = N(2)-methylguanosine(1835) in 23S rRNA + S-adenosyl-L-homocysteine + H(+). Specifically methylates the guanine in position 1835 (m2G1835) of 23S rRNA. The sequence is that of Ribosomal RNA large subunit methyltransferase G from Vibrio parahaemolyticus serotype O3:K6 (strain RIMD 2210633).